The chain runs to 154 residues: Large ribosomal subunit protein uL15 (154 aa).

The tract at residues 1–44 (MKLNELGNCKGATRNRKRVGRGIGSGTGKTSGRGVKGQKSRSGV) is disordered. The span at 21 to 35 (RGIGSGTGKTSGRGV) shows a compositional bias: gly residues.

Belongs to the universal ribosomal protein uL15 family. Part of the 50S ribosomal subunit.

Its function is as follows. Binds to the 23S rRNA. The polypeptide is Large ribosomal subunit protein uL15 (Bartonella quintana (strain Toulouse) (Rochalimaea quintana)).